The sequence spans 360 residues: GDSL esterase/lipase At1g58430 (360 aa).

Residues 1 to 23 form the signal peptide; sequence MWTSKTISFTLFITTTLLGSCNA. Asn22 carries an N-linked (GlcNAc...) asparagine glycan. The Nucleophile role is filled by Ser42. Residues Asn104 and Asn326 are each glycosylated (N-linked (GlcNAc...) asparagine). Catalysis depends on residues Asp334 and His337.

It belongs to the 'GDSL' lipolytic enzyme family.

It localises to the secreted. The protein is GDSL esterase/lipase At1g58430 of Arabidopsis thaliana (Mouse-ear cress).